We begin with the raw amino-acid sequence, 325 residues long: Probable isoaspartyl peptidase/L-asparaginase GA20639 (325 aa).

Threonine 184 serves as the catalytic Nucleophile. Residues 212-215 (RIGD) and 235-238 (TGHG) each bind substrate.

It belongs to the Ntn-hydrolase family. Heterodimer of an alpha and beta chain produced by autocleavage. In terms of processing, cleaved into an alpha and beta chain by autocatalysis; this activates the enzyme. The N-terminal residue of the beta subunit is responsible for the nucleophile hydrolase activity.

The enzyme catalyses L-asparagine + H2O = L-aspartate + NH4(+). The catalysed reaction is Cleavage of a beta-linked Asp residue from the N-terminus of a polypeptide.. In terms of biological role, has both L-asparaginase and beta-aspartyl peptidase activity. Does not have aspartylglucosaminidase activity and is inactive toward GlcNAc-L-Asn. Likewise, has no activity toward glutamine. The chain is Probable isoaspartyl peptidase/L-asparaginase GA20639 from Drosophila pseudoobscura pseudoobscura (Fruit fly).